A 311-amino-acid polypeptide reads, in one-letter code: MKYIVGARGSQLSVAQTNLVIAELKKAHPDTEYEIKTITTKGDTDSRPLFTIDQKGIFEKEIDRAVAQKEVDFAVHSLKDVPSELDDNLVLACIPKRETVNDVFISPDGSTLDSIKPGSVIGTSSLRRAVQVSRKRPDVTVKPIRGNIETRIKKASGENYDAIVLAKAGISRLGVDVKYTELSTDDFSPSPGQGAIAIVARADDSKTIEMLKKIEDPDSRLEIEAERALSDFVDSGCRFPVGAYAKSNGSEMTLTVTAFSVDGKQFLHVSKTGDKNNPKSLGQSAGEELREKGVNDLALNWREKVEEWNKT.

C237 carries the post-translational modification S-(dipyrrolylmethanemethyl)cysteine. The segment at S270–L289 is disordered.

The protein belongs to the HMBS family. Requires dipyrromethane as cofactor.

It carries out the reaction 4 porphobilinogen + H2O = hydroxymethylbilane + 4 NH4(+). It participates in porphyrin-containing compound metabolism; protoporphyrin-IX biosynthesis; coproporphyrinogen-III from 5-aminolevulinate: step 2/4. Functionally, tetrapolymerization of the monopyrrole PBG into the hydroxymethylbilane pre-uroporphyrinogen in several discrete steps. In Nitrosopumilus maritimus (strain SCM1), this protein is Probable porphobilinogen deaminase.